The sequence spans 274 residues: Putative pyruvate, phosphate dikinase regulatory protein 1 (274 aa).

ADP is bound at residue 149–156; it reads GISRTSKT.

It belongs to the pyruvate, phosphate/water dikinase regulatory protein family. PDRP subfamily.

The catalysed reaction is N(tele)-phospho-L-histidyl/L-threonyl-[pyruvate, phosphate dikinase] + ADP = N(tele)-phospho-L-histidyl/O-phospho-L-threonyl-[pyruvate, phosphate dikinase] + AMP + H(+). It carries out the reaction N(tele)-phospho-L-histidyl/O-phospho-L-threonyl-[pyruvate, phosphate dikinase] + phosphate + H(+) = N(tele)-phospho-L-histidyl/L-threonyl-[pyruvate, phosphate dikinase] + diphosphate. Its function is as follows. Bifunctional serine/threonine kinase and phosphorylase involved in the regulation of the pyruvate, phosphate dikinase (PPDK) by catalyzing its phosphorylation/dephosphorylation. The polypeptide is Putative pyruvate, phosphate dikinase regulatory protein 1 (Listeria monocytogenes serotype 4b (strain F2365)).